We begin with the raw amino-acid sequence, 727 residues long: MPVLPDRQVINQLISGHYGDPFSILGMHETSQGLQVCALLPDAQEVWLVETENGRRIAQLTLEDPRGFFIAQLTRRKKSFRYQFAVTWQENPQIIDDPYRFGPLLQDIDSWLLAEGTHLRPYERLGAHLMRLDGVPGVSFAVWAPNAQRVSVVGDFNFWDGRRHPMRLRRENGIWELFLPGIEAGQLYKFEIIDCHGQVRLKADPYAFEAQMRPETASLISPLPDVVKSSAARQKANDLCSPVSIYEVHLGSWRRHTDNNFWLSYRELADQLVEYVKYMGFTHVELLPINEHPFDGSWGYQPLGLYAPTRRYGTPEDFKAFVAKFHQAGINVILDWVPGHFPSDEHGLSTFDGTALYEYADPREGYHQDWNTLIYNYGRNEVRNYLAGNAFYWMERFGIDALRIDAVASMIYRDYSRAEGQWVPNYYGGRENLEAIAFLRYTNKTIGVERPGSVTMAEESTDFPGVTLPPDIGGLGFNYKWNMGWMHDTLNYMQCDPVHRKYHHNLMTFGMLYAYTENFILPLSHDEVVHGKRSILDRMPGDAWQKFANLRAYYAFMWAHPGKKLLFMGCEFAQGREWNFETSLDWHLLDDENGWHSGVQRLVRDLNHCYRQYAPLYEWDYQPAGFEWLVVDDHENSVFAFLRRDAEGHELIAISNFTPVPRYHYRVGIPQGGHYREVLNSDSAFYCGSNLGNQGGIDSHHVRSHNHEHSLLLTLPPLATIYLLREN.

The active-site Nucleophile is aspartate 405. Residue glutamate 458 is the Proton donor of the active site.

This sequence belongs to the glycosyl hydrolase 13 family. GlgB subfamily. Monomer.

The catalysed reaction is Transfers a segment of a (1-&gt;4)-alpha-D-glucan chain to a primary hydroxy group in a similar glucan chain.. Its pathway is glycan biosynthesis; glycogen biosynthesis. Functionally, catalyzes the formation of the alpha-1,6-glucosidic linkages in glycogen by scission of a 1,4-alpha-linked oligosaccharide from growing alpha-1,4-glucan chains and the subsequent attachment of the oligosaccharide to the alpha-1,6 position. This is 1,4-alpha-glucan branching enzyme GlgB from Yersinia pseudotuberculosis serotype O:1b (strain IP 31758).